The chain runs to 220 residues: Ripening-related protein grip22 (220 aa).

The N-terminal stretch at Met1 to Gly27 is a signal peptide.

The protein belongs to the kiwellin family. Expressed in ripening fruits.

Its subcellular location is the secreted. This Vitis vinifera (Grape) protein is Ripening-related protein grip22 (grip22).